Reading from the N-terminus, the 76-residue chain is Brevinin-2ISb (76 aa).

Residues 1 to 22 form the signal peptide; sequence MFTMKKSLLVLFFLGTISLSLC. The propeptide at 23-41 is removed in mature form; it reads QEERNADEEDGGEATEEEV. A disulfide bridge connects residues C70 and C76.

As to expression, expressed by the skin glands.

The protein resides in the secreted. In terms of biological role, has antimicrobial activity against Gram-negative bacterium E.coli ATCC 8739 (MIC=12.5 ug), against Gram positive bacteria S.aureus ATCC 6538 (MIC=6.3 ug) and B.subtilis ATCC 6633 (MIC=25 ug). Has no activity against methicillin-resistant S.aureus ATCC 43300 (MIC= ug) and fungus C.albicans ATCC 90028. This chain is Brevinin-2ISb, found in Odorrana ishikawae (Ishikawa's frog).